Here is a 545-residue protein sequence, read N- to C-terminus: MAELTIRPEEIRDALDNFVQNYEPETAVREEVGTVVTSGDGIAHVEGLPSAMANELLRFENGTMGIALNLEERQIGVVVLGDSDGIDEGSTVRGTGEVLSVPVGEGYLGRVVDAMGNPVDGLGEIKGVEGRRALEIQAAGVMDRQEVREPLQTGLKAIDSMIPIGRGQRQLIIGDRKTGKTAIAIDTIINQKGNWESGDPQKQVRCIYVAIGQKGSTVAEVKGALEKAGAMEYTTIVHAPASDPAGFKYIAPYAGSAIGQHWMYQGKHVLIIFDDLTKQAEAYRAMSLLLRRPPGREAYPGDVFYLHSRLLERCAKLSDDLGGGSMTGLPIIETKANDVSAFIPTNVISITDGQIFLQSDLFNANQRPAVDVGISVSRVGGAAQIKAMKSVAGTLKISLAQYRDMQAFAMFASDLDDTSRRQLDRGARLMELLKQGQFSPYPVEEQVISVWGGTTGKFDDVPVGDVLRFEGDVLEYLRSHSNVLTTIRETGKFDDEAKDAAAAAFEEVKKGFKTSDGKMLAGHEEFSPMADEDIDQAKIVRAKKG.

Residue 174-181 coordinates ATP; that stretch reads GDRKTGKT.

The protein belongs to the ATPase alpha/beta chains family. F-type ATPases have 2 components, CF(1) - the catalytic core - and CF(0) - the membrane proton channel. CF(1) has five subunits: alpha(3), beta(3), gamma(1), delta(1), epsilon(1). CF(0) has three main subunits: a(1), b(2) and c(9-12). The alpha and beta chains form an alternating ring which encloses part of the gamma chain. CF(1) is attached to CF(0) by a central stalk formed by the gamma and epsilon chains, while a peripheral stalk is formed by the delta and b chains.

It localises to the cell membrane. It carries out the reaction ATP + H2O + 4 H(+)(in) = ADP + phosphate + 5 H(+)(out). Its function is as follows. Produces ATP from ADP in the presence of a proton gradient across the membrane. The alpha chain is a regulatory subunit. The sequence is that of ATP synthase subunit alpha from Cutibacterium acnes (strain DSM 16379 / KPA171202) (Propionibacterium acnes).